The chain runs to 233 residues: Large ribosomal subunit protein uL1 (233 aa).

This sequence belongs to the universal ribosomal protein uL1 family. Part of the 50S ribosomal subunit.

Functionally, binds directly to 23S rRNA. The L1 stalk is quite mobile in the ribosome, and is involved in E site tRNA release. Its function is as follows. Protein L1 is also a translational repressor protein, it controls the translation of the L11 operon by binding to its mRNA. The sequence is that of Large ribosomal subunit protein uL1 from Shewanella piezotolerans (strain WP3 / JCM 13877).